A 120-amino-acid chain; its full sequence is Ribonuclease P protein component (120 aa).

This sequence belongs to the RnpA family. Consists of a catalytic RNA component (M1 or rnpB) and a protein subunit.

It carries out the reaction Endonucleolytic cleavage of RNA, removing 5'-extranucleotides from tRNA precursor.. In terms of biological role, RNaseP catalyzes the removal of the 5'-leader sequence from pre-tRNA to produce the mature 5'-terminus. It can also cleave other RNA substrates such as 4.5S RNA. The protein component plays an auxiliary but essential role in vivo by binding to the 5'-leader sequence and broadening the substrate specificity of the ribozyme. This chain is Ribonuclease P protein component, found in Dehalococcoides mccartyi (strain ATCC BAA-2266 / KCTC 15142 / 195) (Dehalococcoides ethenogenes (strain 195)).